The following is a 357-amino-acid chain: UPF0283 membrane protein BAbS19_I09770 (357 aa).

Positions 1–36 (MSDKTPRKPTAFRLEQPARVSAASEQEEPRRPRAVK) are disordered. Basic and acidic residues predominate over residues 27–36 (EEPRRPRAVK). Helical transmembrane passes span 78–98 (ILFGALGILVSFAIGIWTEDL) and 109–129 (LGWTALGVAMVALAAFAAIIL).

Belongs to the UPF0283 family.

The protein resides in the cell inner membrane. The chain is UPF0283 membrane protein BAbS19_I09770 from Brucella abortus (strain S19).